Reading from the N-terminus, the 339-residue chain is Cyclin-Y-like protein 1 (339 aa).

Residues 181 to 263 (QLTAECAIVT…FLELLQFNIN (83 aa)) form the Cyclin N-terminal domain.

Belongs to the cyclin family. Cyclin Y subfamily.

It is found in the cell membrane. Its function is as follows. Key regulator of Wnt signaling implicated in various biological processes such as embryonic neurogenesis. This Danio rerio (Zebrafish) protein is Cyclin-Y-like protein 1 (ccnyl1).